The following is a 350-amino-acid chain: Heme A synthase (350 aa).

8 helical membrane passes run 16–36, 77–97, 101–121, 136–156, 170–190, 201–221, 265–285, and 299–321; these read LARW…VGGI, FQLV…IFFW, HRLL…WFWI, LLAL…SGIV, LLVA…LVAL, GIGL…ALVA, VFLV…VLVV, and IVLH…SGVA. His-272 serves as a coordination point for heme. A heme-binding site is contributed by His-328.

Belongs to the COX15/CtaA family. Type 2 subfamily. As to quaternary structure, interacts with CtaB. Requires heme b as cofactor.

The protein localises to the cell membrane. The catalysed reaction is Fe(II)-heme o + 2 A + H2O = Fe(II)-heme a + 2 AH2. The protein operates within porphyrin-containing compound metabolism; heme A biosynthesis; heme A from heme O: step 1/1. Functionally, catalyzes the conversion of heme O to heme A by two successive hydroxylations of the methyl group at C8. The first hydroxylation forms heme I, the second hydroxylation results in an unstable dihydroxymethyl group, which spontaneously dehydrates, resulting in the formyl group of heme A. In Novosphingobium aromaticivorans (strain ATCC 700278 / DSM 12444 / CCUG 56034 / CIP 105152 / NBRC 16084 / F199), this protein is Heme A synthase.